The chain runs to 546 residues: Thermolysin (546 aa).

A signal peptide spans methionine 1–alanine 25. The propeptide at lysine 26–valine 228 is activation peptide. Ca(2+) contacts are provided by aspartate 287, aspartate 289, glutamine 291, and aspartate 368. Histidine 372 lines the Zn(2+) pocket. Glutamate 373 is an active-site residue. Zn(2+) contacts are provided by histidine 376 and glutamate 396. Residues glutamate 407, asparagine 413, aspartate 415, glutamate 417, glutamate 420, tyrosine 423, threonine 424, isoleucine 427, and aspartate 430 each contribute to the Ca(2+) site. The active-site Proton donor is histidine 461.

It belongs to the peptidase M4 family. Ca(2+) is required as a cofactor. Zn(2+) serves as cofactor.

The protein resides in the secreted. The catalysed reaction is Preferential cleavage: Xaa-|-Leu &gt; Xaa-|-Phe.. Functionally, extracellular zinc metalloprotease. The protein is Thermolysin of Alicyclobacillus acidocaldarius subsp. acidocaldarius (Bacillus acidocaldarius).